Here is a 343-residue protein sequence, read N- to C-terminus: Protein RecA (343 aa).

65 to 72 serves as a coordination point for ATP; it reads GPESSGKT.

Belongs to the RecA family.

The protein localises to the cytoplasm. Functionally, can catalyze the hydrolysis of ATP in the presence of single-stranded DNA, the ATP-dependent uptake of single-stranded DNA by duplex DNA, and the ATP-dependent hybridization of homologous single-stranded DNAs. It interacts with LexA causing its activation and leading to its autocatalytic cleavage. The chain is Protein RecA from Campylobacter jejuni subsp. jejuni serotype O:6 (strain 81116 / NCTC 11828).